Reading from the N-terminus, the 313-residue chain is Porphobilinogen deaminase (313 aa).

Cysteine 241 carries the S-(dipyrrolylmethanemethyl)cysteine modification.

This sequence belongs to the HMBS family. Monomer. Dipyrromethane is required as a cofactor.

It catalyses the reaction 4 porphobilinogen + H2O = hydroxymethylbilane + 4 NH4(+). Its pathway is porphyrin-containing compound metabolism; protoporphyrin-IX biosynthesis; coproporphyrinogen-III from 5-aminolevulinate: step 2/4. The protein operates within porphyrin-containing compound metabolism; chlorophyll biosynthesis. Functionally, tetrapolymerization of the monopyrrole PBG into the hydroxymethylbilane pre-uroporphyrinogen in several discrete steps. The chain is Porphobilinogen deaminase from Chlorobium limicola (strain DSM 245 / NBRC 103803 / 6330).